The chain runs to 518 residues: MAENHAQNKAKLISETRRRFEAEYVTDKSDKYDARDVERLQQDDNWVESYLSWRHNIVDETLKMLDESFQWRKEISVNDLNESSIPRWLLEIGVIYLHGYDKEGNKLFWIRVKYHVKDQKTILDKKKLIAFWLERYAKRENGKPVTVMFDLSETGINSIDMDFVRFIINCFKVYYPKYLSKIVIFDMPWLMNAAFKIVKTWLGPEAVSLLKFTSKNEVQDYVSVEYLPPHMGGTDPFKYSYPPLVDDDFQTPLCENGPITSEDETSSKEDIESDGKETLETISNEEQTPLLKKINPTESTSKAEENEKVDSKVKAFKKPLSVFKGPLLHISPAEELYFGSTESGEKKTLIVLTNVTKNIVAFKVRTTAPEKYRVKPSNSSCDPGASVDIVVSPHGGLTVSAQDRFLIMAAEMEQSSGTGPAELTQFWKEVPRNKVMEHRLRCHTVESSKPNTLTLKDNAFNMSDKTSEDICLQLSRLLESNRKLEDQVQRCIWFQQLLLSLTMLLLAFVTSFFYLLYS.

The Cytoplasmic segment spans residues 1–496; the sequence is MAENHAQNKA…QVQRCIWFQQ (496 aa). One can recognise a CRAL-TRIO domain in the interval 82–239; sequence ESSIPRWLLE…HMGGTDPFKY (158 aa). Positions 252-308 are disordered; the sequence is PLCENGPITSEDETSSKEDIESDGKETLETISNEEQTPLLKKINPTESTSKAEENEK. Basic and acidic residues predominate over residues 265 to 279; sequence TSSKEDIESDGKETL. In terms of domain architecture, MSP spans 327 to 445; sequence LLHISPAEEL…MEHRLRCHTV (119 aa). Positions 365 to 366 are required for FFAT motif binding and phosphorylated FFAT motif binding; it reads RT. Residues 497 to 518 traverse the membrane as a helical; Anchor for type IV membrane protein segment; that stretch reads LLLSLTMLLLAFVTSFFYLLYS.

In terms of assembly, homooligomer. Interacts (via MSP domain) with STARD3NL (via FFAT motif), RMDN3 (via FFAT motif), OSBPL1A (via FFAT motif) and CERT1 (via FFAT motif). Interacts (via MSP domain) with STARD3 (via phosphorylated FFAT motif); this interaction depends on the critical phosphorylation of STARD3 on 'Ser-209'. Interacts with RB1CC1 (via phosphorylated FFAT motif), MIGA2 (via phosphorylated FFAT motif) and OSBPL1A (via FFAT motif). Highly expressed in CD14(+) monocytes, and at lower levels in neutrophils. Does not show significant expression in B-cells or T-cells.

It is found in the endoplasmic reticulum membrane. Functionally, endoplasmic reticulum-anchored protein that mediates the formation of contact sites between the endoplasmic (ER) and endosomes, mitochondria or Golgi through interaction with conventional- and phosphorylated-FFAT-containing organelle-bound proteins. In addition, forms endoplasmic reticulum (ER)-lipid droplets (LDs) contacts through a direct protein-membrane interaction and participates in LDs homeostasis. The attachment mechanism involves an amphipathic helix that has an affinity for lipid packing defects present at the surface of LDs. Promotes migration of primary monocytes and neutrophils, in response to various chemokines. The chain is Motile sperm domain-containing protein 2 from Homo sapiens (Human).